We begin with the raw amino-acid sequence, 987 residues long: 110 kDa U5 small nuclear ribonucleoprotein component CLO (987 aa).

Residues 1-54 are disordered; that stretch reads MESSLYDEFGNYVGPEIESDRDSDDEVEDEDLQDKHLEENGSDGEQGPGGSNGW. Over residues 17 to 32 the composition is skewed to acidic residues; the sequence is IESDRDSDDEVEDEDL. Residues 136-422 enclose the tr-type G domain; sequence ALVRNVALVG…LGVTLSNSAY (287 aa). Residues 145-152 form a G1 region; the sequence is GHLQHGKT. 145 to 152 serves as a coordination point for GTP; sequence GHLQHGKT. The interval 189–193 is G2; the sequence is NISIK. The G3 stretch occupies residues 215-218; sequence DTPG. GTP-binding positions include 215-219 and 269-272; these read DTPGH and NKVD. Residues 269–272 form a G4 region; the sequence is NKVD. Residues 395-397 are G5; that stretch reads YSQ.

The protein belongs to the TRAFAC class translation factor GTPase superfamily. Classic translation factor GTPase family. In terms of assembly, interacts with BRR2A and PRP8A. In terms of tissue distribution, expressed in flower buds, open flowers and siliques. Expressed at low levels in rosettes leaves, cauline leaves and stems.

It localises to the nucleus speckle. Functionally, splicing factor involved in pre-mRNA splicing and component of the spliceosome. Essential for reproduction. In female gametophyte, is necessary for the egg cell and central cell fate determination and hence reproductive success. Involved in a mechanism that prevents accessory cells from adopting gametic cell fate. Is necessary to restrict LIS expression to interfere with egg-cell specification. Probable component of U5 small nuclear ribonucleoprotein (snRNP) that is required for pre-mRNA splicing. Plays an essential role in female gametogenesis and embryo development. Required for the control of polarized cell growth and cell proliferation during floral organ morphogenesis. The chain is 110 kDa U5 small nuclear ribonucleoprotein component CLO from Arabidopsis thaliana (Mouse-ear cress).